The following is a 201-amino-acid chain: Small ribosomal subunit protein uS4 (201 aa).

Residues 91 to 151 (SRLDNVVYRA…EKSQKMIWFE (61 aa)) enclose the S4 RNA-binding domain.

It belongs to the universal ribosomal protein uS4 family. As to quaternary structure, part of the 30S ribosomal subunit. Contacts protein S5. The interaction surface between S4 and S5 is involved in control of translational fidelity.

In terms of biological role, one of the primary rRNA binding proteins, it binds directly to 16S rRNA where it nucleates assembly of the body of the 30S subunit. Functionally, with S5 and S12 plays an important role in translational accuracy. This Corynebacterium diphtheriae (strain ATCC 700971 / NCTC 13129 / Biotype gravis) protein is Small ribosomal subunit protein uS4.